A 206-amino-acid polypeptide reads, in one-letter code: Urease accessory protein UreG (206 aa).

11-18 (GPVGAGKT) is a binding site for GTP.

This sequence belongs to the SIMIBI class G3E GTPase family. UreG subfamily. Homodimer. UreD, UreF and UreG form a complex that acts as a GTP-hydrolysis-dependent molecular chaperone, activating the urease apoprotein by helping to assemble the nickel containing metallocenter of UreC. The UreE protein probably delivers the nickel.

It is found in the cytoplasm. Functionally, facilitates the functional incorporation of the urease nickel metallocenter. This process requires GTP hydrolysis, probably effectuated by UreG. The polypeptide is Urease accessory protein UreG (Ureaplasma parvum serovar 3 (strain ATCC 700970)).